A 315-amino-acid chain; its full sequence is uncharacterized protein (315 aa).

Coiled coils occupy residues Ala184–Gln212 and Glu238–Lys275.

Belongs to the IIV-6 287R family.

This is an uncharacterized protein from Acheta domesticus (House cricket).